The sequence spans 597 residues: MSETTGLPLKHLQGSPPGTPVNTNNESNEASPDDGCRLPDTVTEAEASSDNHGSVLGDNNRNVEVAVGASDNATKQKVYHTGWRLHALTSALCLSLLLSTLETTIVSTALVSIVDALHGFNMAGWIVTSYLVTYTGFLIIYSKLSDIFGCKLMLLLAITIFTVFSMACGASDSMVPLIVFRAFQGMGGSGIYSLSTIMVPLMVPPEKYATYISIMSSTFILSSVLGPILGGAITDHTTWRWVFYFNGPGGALAAVLLAFSVPFNFPYGESDRFFHSLASKQMWKRVDFVGMTVSLAASILIIFALEQGGVAYPWGSGAIVSTFVLSGVLWIAFIAWERLLSKRDGVREPMFPWSLVHNRFVMGLLLNGFFTGFPFMAALINIPQRFQTVNMTSAINAGIRTLPLLLLSPLATAINGILVSKLRVPPLYTLFLGGSLQTIGVGLYSSLKSSTSIASAQYGYEAIMGLGFGFNLSTILMMVPLVVTEKDLAVTMGSVTQIRVLGGTIGLAVCSALLINHIKREAVKFLTAEQVAQILLSSENIGMLSIETQSRTRVLYADAYSEQMRVMLYFSIASILSLVLLVERQPRKAPAKPERAG.

The tract at residues 1–55 (MSETTGLPLKHLQGSPPGTPVNTNNESNEASPDDGCRLPDTVTEAEASSDNHGSV) is disordered. Polar residues-rich tracts occupy residues 20–30 (PVNTNNESNEA) and 46–55 (EASSDNHGSV). A glycan (N-linked (GlcNAc...) asparagine) is linked at asparagine 25. A glycan (N-linked (GlcNAc...) asparagine) is linked at asparagine 72. The next 9 membrane-spanning stretches (helical) occupy residues 94–114 (LSLLLSTLETTIVSTALVSIV), 120–140 (FNMAGWIVTSYLVTYTGFLII), 147–167 (IFGCKLMLLLAITIFTVFSMA), 183–203 (FQGMGGSGIYSLSTIMVPLMV), 214–234 (IMSSTFILSSVLGPILGGAIT), 241–261 (WVFYFNGPGGALAAVLLAFSV), 286–306 (VDFVGMTVSLAASILIIFALE), 316–336 (SGAIVSTFVLSGVLWIAFIAW), and 360–380 (FVMGLLLNGFFTGFPFMAALI). N-linked (GlcNAc...) asparagine glycosylation is present at asparagine 390. 5 helical membrane passes run 402-422 (LPLLLLSPLATAINGILVSKL), 424-444 (VPPLYTLFLGGSLQTIGVGLY), 463-483 (IMGLGFGFNLSTILMMVPLVV), 498-518 (IRVLGGTIGLAVCSALLINHI), and 562-582 (EQMRVMLYFSIASILSLVLLV).

The protein belongs to the major facilitator superfamily. TCR/Tet family.

It is found in the membrane. The protein operates within secondary metabolite biosynthesis. MFS-type transporter; part of the gene cluster that mediates the biosynthesis of the gamma-pyrones fusapyrone (FPY) and deoxyfusapyrone (dFPY). This is MFS-type transporter FPY5 from Fusarium mangiferae (Mango malformation disease fungus).